The following is a 426-amino-acid chain: Glutamyl-tRNA reductase (426 aa).

Residues 49 to 52 (TCNR), Ser-109, 114 to 116 (EGQ), and Gln-120 contribute to the substrate site. Catalysis depends on Cys-50, which acts as the Nucleophile. 189 to 194 (GAGKMS) serves as a coordination point for NADP(+).

This sequence belongs to the glutamyl-tRNA reductase family. As to quaternary structure, homodimer.

The catalysed reaction is (S)-4-amino-5-oxopentanoate + tRNA(Glu) + NADP(+) = L-glutamyl-tRNA(Glu) + NADPH + H(+). Its pathway is porphyrin-containing compound metabolism; protoporphyrin-IX biosynthesis; 5-aminolevulinate from L-glutamyl-tRNA(Glu): step 1/2. The protein operates within porphyrin-containing compound metabolism; chlorophyll biosynthesis. Functionally, catalyzes the NADPH-dependent reduction of glutamyl-tRNA(Glu) to glutamate 1-semialdehyde (GSA). The sequence is that of Glutamyl-tRNA reductase from Thermosynechococcus vestitus (strain NIES-2133 / IAM M-273 / BP-1).